Here is a 561-residue protein sequence, read N- to C-terminus: V-type proton ATPase catalytic subunit A (561 aa).

Residue 190–197 (GAFGCGKT) participates in ATP binding.

The protein belongs to the ATPase alpha/beta chains family. As to quaternary structure, V-ATPase is a heteromultimeric enzyme composed of a peripheral catalytic V1 complex (main components: subunits A, B, C, D, E, and F) attached to an integral membrane V0 proton pore complex (main component: the proteolipid protein). In terms of tissue distribution, high expression in the mesocotyl tip of etiolated seedlings compared to the base.

It carries out the reaction ATP + H2O + 4 H(+)(in) = ADP + phosphate + 5 H(+)(out). Its function is as follows. Catalytic subunit of the peripheral V1 complex of vacuolar ATPase. V-ATPase vacuolar ATPase is responsible for acidifying a variety of intracellular compartments in eukaryotic cells. This chain is V-type proton ATPase catalytic subunit A, found in Zea mays (Maize).